The primary structure comprises 494 residues: Alpha-amylase A (494 aa).

An N-terminal signal peptide occupies residues Met-1–Ala-18. Gln-19 carries the pyrrolidone carboxylic acid modification. Cys-46 and Cys-102 form a disulfide bridge. The Ca(2+) site is built by Asn-116, Arg-165, and Asp-174. Cys-153 and Cys-167 form a disulfide bridge. Arg-202 contributes to the chloride binding site. Asp-204 (nucleophile) is an active-site residue. His-208 is a Ca(2+) binding site. Glu-241 acts as the Proton donor in catalysis. Positions 304 and 343 each coordinate chloride. Disulfide bonds link Cys-376/Cys-382 and Cys-448/Cys-460.

It belongs to the glycosyl hydrolase 13 family. As to quaternary structure, monomer. It depends on Ca(2+) as a cofactor. The cofactor is chloride.

It carries out the reaction Endohydrolysis of (1-&gt;4)-alpha-D-glucosidic linkages in polysaccharides containing three or more (1-&gt;4)-alpha-linked D-glucose units.. The protein is Alpha-amylase A (Amy-p) of Drosophila melanogaster (Fruit fly).